The following is a 1072-amino-acid chain: Integrator complex subunit 3 homolog (1072 aa).

Disordered regions lie at residues Y920–S943 and D1002–D1072. Residues S1042, S1043, S1047, and S1048 each carry the phosphoserine modification.

It belongs to the Integrator subunit 3 family. In terms of assembly, belongs to the multiprotein complex Integrator, at least composed of IntS1, IntS2, IntS3, IntS4, omd/IntS5, IntS6, defl/IntS7, IntS8, IntS9, IntS10, IntS11, IntS12, asun/IntS13, IntS14 and IntS15. The core complex associates with protein phosphatase 2A subunits mts/PP2A and Pp2A-29B, to form the Integrator-PP2A (INTAC) complex.

It is found in the nucleus. It localises to the cytoplasm. Its function is as follows. Component of the integrator complex, a multiprotein complex that terminates RNA polymerase II (Pol II) transcription in the promoter-proximal region of genes. The integrator complex provides a quality checkpoint during transcription elongation by driving premature transcription termination of transcripts that are unfavorably configured for transcriptional elongation: the complex terminates transcription by (1) catalyzing dephosphorylation of the C-terminal domain (CTD) of Pol II subunit Polr2A/Rbp1 and Spt5, and (2) degrading the exiting nascent RNA transcript via endonuclease activity. The integrator complex is also involved in the 3'-end processing of the U7 snRNA, and also the spliceosomal snRNAs U1, U2, U4 and U5. The chain is Integrator complex subunit 3 homolog (IntS3) from Drosophila yakuba (Fruit fly).